The following is a 305-amino-acid chain: MAAREESTQSANRVLRISQLDALELNKALEQLVWSQFTQCFHGFKPGLLARFEPEVKAFLWLFLWRFTIYSKNATVGQSVLNIQHKNDSSPNPVYQPPSKNQKLLYAVCTIGGRWLEERCYDLFRNRHLASFGKAKQCMNFVVGLLKLGELMNFLIFLQKGKFATLTERLLGIHSVFCKPQNMREVGFEYMNRELLWHGFAEFLIFLLPLINIQKLKAKLSSWCTLCTGAAGHDSTLGSSGKECALCGEWPTMPHTIGCEHVFCYYCVKSSFLFDIYFTCPKCGTEVHSVQPLKAGIQMSEVNAL.

At Met-1–Leu-15 the chain is on the peroxisomal matrix side. A helical transmembrane segment spans residues Arg-16–His-42. Residues Gly-43–Leu-48 lie on the Cytoplasmic side of the membrane. Residues Leu-49–Ala-74 traverse the membrane as a helical segment. Over Thr-75–Pro-98 the chain is Peroxisomal matrix. Residues Ser-99–Arg-125 traverse the membrane as a helical segment. The Cytoplasmic portion of the chain corresponds to Asn-126–Gly-133. Residues Lys-134–Lys-160 traverse the membrane as a helical segment. Over Gly-161 to Gly-187 the chain is Peroxisomal matrix. A helical membrane pass occupies residues Phe-188 to Ile-211. At Asn-212–Leu-305 the chain is on the cytoplasmic side. Cys-244, Cys-247, Cys-259, His-261, Cys-264, Cys-267, Cys-280, and Cys-283 together coordinate Zn(2+). Residues Cys-244–Gly-284 form an RING-type zinc finger.

This sequence belongs to the pex2/pex10/pex12 family. In terms of assembly, component of the PEX2-PEX10-PEX12 retrotranslocation channel, composed of PEX2, PEX10 and PEX12. Forms intramolecular and intermolecular disulfide bonds in response to reactive oxygen species (ROS), promoting higher stability.

Its subcellular location is the peroxisome membrane. It carries out the reaction [E2 ubiquitin-conjugating enzyme]-S-ubiquitinyl-L-cysteine + [acceptor protein]-L-cysteine = [E2 ubiquitin-conjugating enzyme]-L-cysteine + [acceptor protein]-S-ubiquitinyl-L-cysteine.. It catalyses the reaction S-ubiquitinyl-[E2 ubiquitin-conjugating enzyme]-L-cysteine + [acceptor protein]-L-lysine = [E2 ubiquitin-conjugating enzyme]-L-cysteine + N(6)-ubiquitinyl-[acceptor protein]-L-lysine.. It participates in protein modification; protein ubiquitination. E3 ubiquitin-protein ligase component of a retrotranslocation channel required for peroxisome organization by mediating export of the PEX5 receptor from peroxisomes to the cytosol, thereby promoting PEX5 recycling. The retrotranslocation channel is composed of PEX2, PEX10 and PEX12; each subunit contributing transmembrane segments that coassemble into an open channel that specifically allows the passage of PEX5 through the peroxisomal membrane. PEX2 also regulates peroxisome organization by acting as a E3 ubiquitin-protein ligase. PEX2 ubiquitinates PEX5 during its passage through the retrotranslocation channel: catalyzes monoubiquitination of PEX5 at 'Cys-11', a modification that acts as a signal for PEX5 extraction into the cytosol. Required for pexophagy in response to starvation by mediating ubiquitination of peroxisomal proteins, such as PEX5 and ABCD3/PMP70. Also involved in the response to reactive oxygen species (ROS) by mediating 'Lys-48'-linked polyubiquitination and subsequent degradation of PNPLA2/ATGL, thereby regulating lipolysis. This is Peroxisome biogenesis factor 2 from Mus musculus (Mouse).